Reading from the N-terminus, the 993-residue chain is Synaptonemal complex protein 1 (993 aa).

Positions Pro98–Lys108 match the Mediates head to head self-assembly of N-terminal ends motif. The short motif at Lys114–Lys117 is the Nuclear localization signal element. Coiled-coil stretches lie at residues Lys117 to Glu172 and Ile215 to Asn688. The segment at Glu203–Gln359 is interaction with SYCE3. The required for pH-induced assembly of C-terminal ends into antiparallel tetramers stretch occupies residues Gly694–Glu788. The short motif at Leu697–Val700 is the Nuclear localization signal element. Residues Lys764–Lys808 are a coiled coil. A DNA-binding region spans residues Asn801–Ser993. Ser820 bears the Phosphoserine mark. The disordered stretch occupies residues Thr824–Ala861. The segment covering Lys831–Ser847 has biased composition (polar residues). Basic and acidic residues predominate over residues Gly848–Leu857. Residues Lys898 to Lys901 carry the Nuclear localization signal motif.

Structural component of synaptonemal complexes. Homotetramer that consists of an N-terminal four-helical bundle that bifurcates into two elongated C-terminal dimeric coiled coils. This tetrameric building block potentially self-assembles into a supramolecular zipper-like lattice to mediate meiotic chromosome synapsis. Self-assembly is likely initiated by local proton density at chromosome axis, which is predicted to trigger antiparallel back to back assembly of adjacent C-terminal ends into tetrameric structures that anchor to chromosomal DNA. Then the N-terminal ends are predicted to undergo cooperative antiparallel head to head assembly at the midline of synaptonemal complexes central element to form a zipper-like lattice between properly aligned homologous chromosomes. The nascent synapsis generated by SYCP1 is stabilized through interaction with central element proteins SYCE1 and SYCE2. Interacts (via tetrameric core) with SYCE3; the interaction remodels SYCP1 homotetramers to 2:1 heterotrimers with SYCE3. SYCP1/SYCE3 heterotrimers form lattice assemblies as part of the mature synaptonemal complex via both lateral and head-to-head interactions. Forms a complex with EWSR1, PRDM9, SYCP3 and REC8; complex formation is dependent of phosphorylated form of REC8 and requires PRDM9 bound to hotspot DNA; EWSR1 joins PRDM9 with the chromosomal axis through REC8. Interacts with SPO16. As to expression, detected in testis. Detected in spermatocytes (at protein level).

It is found in the nucleus. Its subcellular location is the chromosome. It localises to the centromere. Major component of the transverse filaments of synaptonemal complexes, formed between homologous chromosomes during meiotic prophase. Required for normal assembly of the central element of the synaptonemal complexes. Required for normal centromere pairing during meiosis. Required for normal meiotic chromosome synapsis during oocyte and spermatocyte development and for normal male and female fertility. This Mus musculus (Mouse) protein is Synaptonemal complex protein 1.